We begin with the raw amino-acid sequence, 418 residues long: MKAEIIAVGTEILTGQIVNTNAQFLSEKLAEIGVDVYFQTAVGDNEVRLLSLLEIASQRSSLVILTGGLGPTEDDLTKQTLAKFLGKALVFDPQAQEKLDIFFALRPDYARTPNNERQAQIVEGAIPLPNETGLAVGGKLEVDGVTYVVLPGPPSELKPMVLNQLLPKLMTGSKLYSRVLRFFGIGESQLVTILADLIDNQIDPTLAPYAKTGEVTLRLSTKASSQEEANQALDILENQILDCQTFEGISLRDFCYGYGEETSLASIVVEELKRQGKTIAAAESLTAGLFQATVANFSGASSIFKGGFVTYSLEEKSRMLDIPAKNLEEHGVVSEFTAQKMAEQARSKTQSDFGISLTGVAGPDSLEGHPVGTVFIGLAQEQGTEVIKVNIGGRSRADVRHIAVMHAFNLVRKALLSD.

This sequence belongs to the CinA family.

This is Putative competence-damage inducible protein from Streptococcus pneumoniae (strain 70585).